A 1162-amino-acid chain; its full sequence is DNA-directed RNA polymerase subunit beta (1162 aa).

It belongs to the RNA polymerase beta chain family. In terms of assembly, the RNAP catalytic core consists of 2 alpha, 1 beta, 1 beta' and 1 omega subunit. When a sigma factor is associated with the core the holoenzyme is formed, which can initiate transcription.

It carries out the reaction RNA(n) + a ribonucleoside 5'-triphosphate = RNA(n+1) + diphosphate. In terms of biological role, DNA-dependent RNA polymerase catalyzes the transcription of DNA into RNA using the four ribonucleoside triphosphates as substrates. The protein is DNA-directed RNA polymerase subunit beta of Clavibacter sepedonicus (Clavibacter michiganensis subsp. sepedonicus).